The following is a 234-amino-acid chain: Demethylmenaquinone methyltransferase (234 aa).

S-adenosyl-L-methionine contacts are provided by residues Thr-58, Asp-79, and 106 to 107 (NA).

This sequence belongs to the class I-like SAM-binding methyltransferase superfamily. MenG/UbiE family.

The catalysed reaction is a 2-demethylmenaquinol + S-adenosyl-L-methionine = a menaquinol + S-adenosyl-L-homocysteine + H(+). Its pathway is quinol/quinone metabolism; menaquinone biosynthesis; menaquinol from 1,4-dihydroxy-2-naphthoate: step 2/2. In terms of biological role, methyltransferase required for the conversion of demethylmenaquinol (DMKH2) to menaquinol (MKH2). The polypeptide is Demethylmenaquinone methyltransferase (Bacillus pumilus (strain SAFR-032)).